The following is a 297-amino-acid chain: Acetylglutamate kinase (297 aa).

Residues 68–69 (GG), R90, and N189 contribute to the substrate site.

This sequence belongs to the acetylglutamate kinase family. ArgB subfamily.

Its subcellular location is the cytoplasm. The catalysed reaction is N-acetyl-L-glutamate + ATP = N-acetyl-L-glutamyl 5-phosphate + ADP. The protein operates within amino-acid biosynthesis; L-arginine biosynthesis; N(2)-acetyl-L-ornithine from L-glutamate: step 2/4. Functionally, catalyzes the ATP-dependent phosphorylation of N-acetyl-L-glutamate. The polypeptide is Acetylglutamate kinase (Akkermansia muciniphila (strain ATCC BAA-835 / DSM 22959 / JCM 33894 / BCRC 81048 / CCUG 64013 / CIP 107961 / Muc)).